A 214-amino-acid chain; its full sequence is Adenylate kinase (214 aa).

11–16 (GTGKGT) contacts ATP. The segment at 31-61 (SSGDLFRFYAKEEKTALAEEIKSYINNGLYV) is NMP. AMP contacts are provided by residues Ser-32, Arg-37, 59 to 61 (LYV), 87 to 90 (GYPR), and Gln-94. Residues 124 to 163 (LRRSCPQCKRIYNINSVDFKPKVANLCDLCKVELIHRKDD) form an LID region. Residue Arg-125 coordinates ATP. Positions 128 and 131 each coordinate Zn(2+). 134-135 (IY) is a binding site for ATP. Zn(2+) is bound by residues Cys-150 and Cys-153. AMP-binding residues include Arg-160 and Arg-171. Lys-199 contacts ATP.

The protein belongs to the adenylate kinase family. In terms of assembly, monomer.

The protein localises to the cytoplasm. The catalysed reaction is AMP + ATP = 2 ADP. Its pathway is purine metabolism; AMP biosynthesis via salvage pathway; AMP from ADP: step 1/1. Its function is as follows. Catalyzes the reversible transfer of the terminal phosphate group between ATP and AMP. Plays an important role in cellular energy homeostasis and in adenine nucleotide metabolism. This is Adenylate kinase from Mycoplasmoides gallisepticum (strain R(low / passage 15 / clone 2)) (Mycoplasma gallisepticum).